A 374-amino-acid polypeptide reads, in one-letter code: uncharacterized protein (374 aa).

A signal peptide spans 1-23 (MDSKWFFIVLISFLLVLPSIVTP). The disordered stretch occupies residues 66–374 (SSSSSSSSSS…SSSSSSSGEN (309 aa)).

Its subcellular location is the secreted. This is an uncharacterized protein from Dictyostelium discoideum (Social amoeba).